We begin with the raw amino-acid sequence, 141 residues long: Large ribosomal subunit protein uL11 (141 aa).

This sequence belongs to the universal ribosomal protein uL11 family. As to quaternary structure, part of the ribosomal stalk of the 50S ribosomal subunit. Interacts with L10 and the large rRNA to form the base of the stalk. L10 forms an elongated spine to which L12 dimers bind in a sequential fashion forming a multimeric L10(L12)X complex. In terms of processing, one or more lysine residues are methylated.

Its function is as follows. Forms part of the ribosomal stalk which helps the ribosome interact with GTP-bound translation factors. This is Large ribosomal subunit protein uL11 from Gloeobacter violaceus (strain ATCC 29082 / PCC 7421).